The primary structure comprises 403 residues: Argininosuccinate synthase (403 aa).

ATP-binding positions include 10–18 (AYSGGVDTS) and A38. An L-citrulline-binding site is contributed by Y89. Position 119 (G119) interacts with ATP. The L-aspartate site is built by T121, N125, and D126. Residue N125 participates in L-citrulline binding. R129, S177, S186, E262, and Y274 together coordinate L-citrulline.

This sequence belongs to the argininosuccinate synthase family. Type 1 subfamily. Homotetramer.

The protein localises to the cytoplasm. The catalysed reaction is L-citrulline + L-aspartate + ATP = 2-(N(omega)-L-arginino)succinate + AMP + diphosphate + H(+). The protein operates within amino-acid biosynthesis; L-arginine biosynthesis; L-arginine from L-ornithine and carbamoyl phosphate: step 2/3. This chain is Argininosuccinate synthase, found in Synechococcus sp. (strain CC9605).